The primary structure comprises 119 residues: Acidic phospholipase A2 E (119 aa).

Cystine bridges form between C11–C71, C26–C118, C28–C44, C43–C99, C50–C92, C60–C85, and C78–C90. The Ca(2+) site is built by Y27, G29, and G31. The active site involves H47. D48 provides a ligand contact to Ca(2+). Residue D93 is part of the active site.

This sequence belongs to the phospholipase A2 family. Group I subfamily. D49 sub-subfamily. The cofactor is Ca(2+). In terms of tissue distribution, expressed by the venom gland.

It is found in the secreted. It carries out the reaction a 1,2-diacyl-sn-glycero-3-phosphocholine + H2O = a 1-acyl-sn-glycero-3-phosphocholine + a fatty acid + H(+). PLA2 catalyzes the calcium-dependent hydrolysis of the 2-acyl groups in 3-sn-phosphoglycerides. This chain is Acidic phospholipase A2 E, found in Naja oxiana (Central Asian cobra).